Here is a 413-residue protein sequence, read N- to C-terminus: Protein esc1 (413 aa).

The segment covering 1 to 22 has biased composition (polar residues); that stretch reads MSSYALPSMQPTPTSSIPLRQM. Disordered regions lie at residues 1-202 and 230-265; these read MSSY…NQPS and MYVPQQQTSHSSGASYQNESANPPVQSPMQYSYSQG. Residues 23–42 show a composition bias toward low complexity; sequence SQPTTSAPSNSASSTPYSPQ. Positions 43–63 are enriched in polar residues; that stretch reads QVPLTHNSYPLSTPSSFQHGQ. Composition is skewed to low complexity over residues 86–103 and 116–126; these read SAAPASSSPTSATLSTAA and SSSSYVYSVPP. Residues 127–136 show a composition bias toward polar residues; it reads TNSTTSQASA. Residues 150-197 are compositionally biased toward low complexity; the sequence is STTLTPSTTDSSSTDVSSSDSVSTSASSSNASNTVSVTSPASSSATPL. Residues 334 to 385 form the bHLH domain; sequence ELRTSHKLAERKRRKEIKELFDDLKDALPLDKSTKSSKWGLLTRAIQYIEQL.

As to quaternary structure, efficient DNA binding requires dimerization with another bHLH protein.

It localises to the nucleus. Its function is as follows. Involved in the sexual differentiation process. Modulate the ability of the cell to differentiate in response to the nitrogen starvation signal; in particular in response to decreases in the level of cellular cAMP. The sequence is that of Protein esc1 (esc1) from Schizosaccharomyces pombe (strain 972 / ATCC 24843) (Fission yeast).